Here is a 495-residue protein sequence, read N- to C-terminus: Aspartyl/glutamyl-tRNA(Asn/Gln) amidotransferase subunit B (495 aa).

The protein belongs to the GatB/GatE family. GatB subfamily. Heterotrimer of A, B and C subunits.

The catalysed reaction is L-glutamyl-tRNA(Gln) + L-glutamine + ATP + H2O = L-glutaminyl-tRNA(Gln) + L-glutamate + ADP + phosphate + H(+). It carries out the reaction L-aspartyl-tRNA(Asn) + L-glutamine + ATP + H2O = L-asparaginyl-tRNA(Asn) + L-glutamate + ADP + phosphate + 2 H(+). Its function is as follows. Allows the formation of correctly charged Asn-tRNA(Asn) or Gln-tRNA(Gln) through the transamidation of misacylated Asp-tRNA(Asn) or Glu-tRNA(Gln) in organisms which lack either or both of asparaginyl-tRNA or glutaminyl-tRNA synthetases. The reaction takes place in the presence of glutamine and ATP through an activated phospho-Asp-tRNA(Asn) or phospho-Glu-tRNA(Gln). In Prochlorococcus marinus (strain MIT 9313), this protein is Aspartyl/glutamyl-tRNA(Asn/Gln) amidotransferase subunit B.